The primary structure comprises 128 residues: Protein BEX2 (128 aa).

Arginine 50 bears the Omega-N-methylarginine mark. Residues 107 to 128 (SLRAVSTDPPHHDHHDEFCLMP) are disordered. Over residues 115–128 (PPHHDHHDEFCLMP) the composition is skewed to basic and acidic residues. Positions 117-121 (HHDHH) are his cluster. Cysteine 125 lines the Zn(2+) pocket.

Belongs to the BEX family. As to quaternary structure, interacts with LMO2, possibly leading to regulate the transcriptional activity of a DNA-binding complex containing LMO2. Interacts with OMP. In terms of tissue distribution, expressed in central nervous system, with high level in pituitary, cerebellum and temporal lobe. Widely expressed in breast cancer cell lines.

It localises to the cytoplasm. It is found in the nucleus. Its function is as follows. Regulator of mitochondrial apoptosis and G1 cell cycle in breast cancer. Protects the breast cancer cells against mitochondrial apoptosis and this effect is mediated through the modulation of BCL2 protein family, which involves the positive regulation of anti-apoptotic member BCL2 and the negative regulation of pro-apoptotic members BAD, BAK1 and PUMA. Required for the normal cell cycle progression during G1 in breast cancer cells through the regulation of CCND1 and CDKN1A. Regulates the level of PP2A regulatory subunit B and PP2A phosphatase activity. In absence of reductive stress, acts as a pseudosubstrate for the CRL2(FEM1B) complex: associates with FEM1B via zinc, thereby preventing association between FEM1B and its substrates. In Homo sapiens (Human), this protein is Protein BEX2 (BEX2).